Reading from the N-terminus, the 418-residue chain is Xanthosine permease (418 aa).

Residues 1–9 (MSIAMRLKV) are Cytoplasmic-facing. A helical transmembrane segment spans residues 10–30 (MSFLQYFIWGSWLVTLGSYMI). At 31-41 (NTLHFTGANVG) the chain is on the periplasmic side. A helical membrane pass occupies residues 42–62 (MVYSSKGIAAIIMPGIMGIIA). Over 63-70 (DKWLRAER) the chain is Cytoplasmic. Transmembrane regions (helical) follow at residues 71–91 (AYML…SVTD) and 92–112 (PDMM…TIAL). Residues 113–136 (SNSVSYSCLAQAGLDPVTAFPPIR) are Cytoplasmic-facing. A helical transmembrane segment spans residues 137–157 (VFGTVGFIVAMWAVSLLHLEL). At 158 to 159 (SS) the chain is on the periplasmic side. The chain crosses the membrane as a helical span at residues 160-180 (LQLYIASGASLLLSAYALTLP). Residues 181-209 (KIPVAEKKATTSLASKLGLDAFVLFKNPR) are Cytoplasmic-facing. The helical transmembrane segment at 210–230 (MAIFFLFAMMLGAVLQITNVF) threads the bilayer. Over 231-254 (GNPFLHDFARNPEFADSFVVKYPS) the chain is Periplasmic. Residues 255-275 (ILLSVSQMAEVGFILTIPFFL) form a helical membrane-spanning segment. Over 276–277 (KR) the chain is Cytoplasmic. Residues 278–298 (FGIKTVMLMSMVAWTLRFGFF) traverse the membrane as a helical segment. The Periplasmic portion of the chain corresponds to 299 to 306 (AYGDPSTT). Residues 307 to 327 (GFILLLLSMIVYGCAFDFFNI) form a helical membrane-spanning segment. Over 328–348 (SGSVFVEQEVDSSIRASAQGL) the chain is Cytoplasmic. The helical transmembrane segment at 349–369 (FMTMVNGVGAWVGSILSGMAV) threads the bilayer. At 370–381 (DYFSVDGVKDWQ) the chain is on the periplasmic side. Residues 382-402 (TIWLVFAGYALFLAVIFFFGF) form a helical membrane-spanning segment. The Cytoplasmic portion of the chain corresponds to 403–418 (KYNHDPEKIKHRAVTH).

It belongs to the major facilitator superfamily. Nucleoside:H(+) symporter (NHS) (TC 2.A.1.10) family.

It localises to the cell inner membrane. The enzyme catalyses xanthosine(in) + H(+)(in) = xanthosine(out) + H(+)(out). Its activity is regulated as follows. Transport is abolished by the proton uncoupler 2,4-dinitrophenol. In terms of biological role, uptake of xanthosine. Can also transport other nucleosides such as inosine, adenosine, cytidine, uridine and thymidine. Transport is driven by a proton motive force. The polypeptide is Xanthosine permease (Escherichia coli (strain K12)).